Consider the following 255-residue polypeptide: Ciliogenesis and planar polarity effector 2 (255 aa).

Positions 52–255 are small GTPase-like; the sequence is PADIASYKLF…VIAGLVGGAD (204 aa). GTP contacts are provided by residues 64-71 and 177-180; these read GRSGAGKT and TKLD.

Belongs to the small GTPase superfamily. Rab family.

The protein localises to the cytoplasm. Its subcellular location is the cytoskeleton. It localises to the cilium basal body. In terms of biological role, potential effector of the planar cell polarity signaling pathway. Plays a role in targeted membrane trafficking most probably at the level of vesicle fusion with membranes. Involved in cilium biogenesis by regulating the transport of cargo proteins to the basal body and to the apical tips of cilia. More generally involved in exocytosis in secretory cells. This is Ciliogenesis and planar polarity effector 2 (cplane2) from Xenopus tropicalis (Western clawed frog).